The primary structure comprises 906 residues: Probable helicase HelY (906 aa).

Residues 26–184 (CSALERGHGV…WIQTVRGDTT (159 aa)) enclose the Helicase ATP-binding domain. 39–46 (APTGAGKT) contacts ATP. The short motif at 132 to 135 (DEVH) is the DEVH box element. One can recognise a Helicase C-terminal domain in the interval 259 to 463 (GRPEVIAKLD…SYNMTINLVH (205 aa)).

It belongs to the helicase family. SKI2 subfamily.

This chain is Probable helicase HelY (helY), found in Mycobacterium tuberculosis (strain CDC 1551 / Oshkosh).